Consider the following 757-residue polypeptide: RNA-directed RNA polymerase catalytic subunit (757 aa).

The segment at 53 to 82 is disordered; it reads GRWTTNTETGAPQLNPIDGPLPEDNEPSGY. Polar residues predominate over residues 55–64; sequence WTTNTETGAP. 2 short sequence motifs (nuclear localization signal) span residues 187–195 and 203–216; these read RKRRVRDNM and RTMG…NKRS. Residues 249–256 form a promoter-binding site region; it reads RGFVYFVE. One can recognise a RdRp catalytic domain in the interval 286–483; sequence VRKMMTNSQD…GINMSKKKSY (198 aa).

It belongs to the influenza viruses polymerase PB1 family. In terms of assembly, influenza RNA polymerase is composed of three subunits: PB1, PB2 and PA. Interacts (via N-terminus) with PA (via C-terminus). Interacts (via C-terminus) with PB2 (via N-terminus); this interaction is essential for transcription initiation. Interacts (via C-terminus) with human PKP2 (via N-terminus); the interaction competitively inhibits the interaction between the RNA polymerase subunits PB1 and PB2. In terms of processing, phosphorylated by host PRKCA.

Its subcellular location is the host nucleus. The protein resides in the host cytoplasm. The catalysed reaction is RNA(n) + a ribonucleoside 5'-triphosphate = RNA(n+1) + diphosphate. In terms of biological role, RNA-dependent RNA polymerase which is responsible for replication and transcription of virus RNA segments. The transcription of viral mRNAs occurs by a unique mechanism called cap-snatching. 5' methylated caps of cellular mRNAs are cleaved after 10-13 nucleotides by PA. In turn, these short capped RNAs are used as primers by PB1 for transcription of viral mRNAs. During virus replication, PB1 initiates RNA synthesis and copy vRNA into complementary RNA (cRNA) which in turn serves as a template for the production of more vRNAs. In Influenza A virus (strain A/Russia:St.Petersburg/8/2006 H1N1), this protein is RNA-directed RNA polymerase catalytic subunit.